Reading from the N-terminus, the 144-residue chain is Grifin (144 aa).

One can recognise a Galectin domain in the interval 5–133 (FEAFCAGGLA…EHRLAQVELA (129 aa)). S138 bears the Phosphoserine mark.

Homodimer.

In Mus musculus (Mouse), this protein is Grifin (Grifin).